Reading from the N-terminus, the 125-residue chain is Small ribosomal subunit protein eS8 (125 aa).

The protein belongs to the eukaryotic ribosomal protein eS8 family. Part of the 30S ribosomal subunit.

This is Small ribosomal subunit protein eS8 from Methanocella arvoryzae (strain DSM 22066 / NBRC 105507 / MRE50).